The chain runs to 230 residues: Cytidylate kinase (230 aa).

11-19 (GQSAAGKST) provides a ligand contact to ATP.

The protein belongs to the cytidylate kinase family. Type 1 subfamily.

Its subcellular location is the cytoplasm. The catalysed reaction is CMP + ATP = CDP + ADP. The enzyme catalyses dCMP + ATP = dCDP + ADP. The chain is Cytidylate kinase from Chloroflexus aggregans (strain MD-66 / DSM 9485).